The chain runs to 380 residues: Cyclohex-1-ene-1-carbonyl-CoA dehydrogenase (380 aa).

The active-site Proton acceptor is the D91. FAD-binding residues include L122, A124, T125, S131, and T157. S131 is a cyclohex-1-ene-1-carbonyl-CoA binding site. S131 provides a ligand contact to cyclohexa-1,5-diene-1-carbonyl-CoA. Positions 178, 242, and 363 each coordinate cyclohex-1-ene-1-carbonyl-CoA. Residues K178, R242, and T363 each contribute to the cyclohexa-1,5-diene-1-carbonyl-CoA site. Residues T365 and Q367 each contribute to the FAD site. R375 serves as a coordination point for cyclohex-1-ene-1-carbonyl-CoA. A cyclohexa-1,5-diene-1-carbonyl-CoA-binding site is contributed by R375.

It belongs to the acyl-CoA dehydrogenase family. Homotetramer. The cofactor is FAD.

The catalysed reaction is cyclohex-1-ene-1-carbonyl-CoA + oxidized [electron-transfer flavoprotein] + H(+) = cyclohexa-1,5-diene-1-carbonyl-CoA + reduced [electron-transfer flavoprotein]. Its function is as follows. Acyl-CoA dehydrogenase involved in the anaerobic degradation of cyclohexane carboxylic acid (CHC). Catalyzes the 1,4-dehydrogenation at C3 and C6 of cyclohex-1-ene-1-carbonyl-CoA (CHeneCoA or Ch1CoA) to cyclohexa-1,5-diene-1-carbonyl-CoA (CHdieneCoA or Ch1,5CoA). Also able to catalyze, at a lower rate, the dehydrogenation at C3 and C4 of CHdieneCoA to benzoyl-CoA. The chain is Cyclohex-1-ene-1-carbonyl-CoA dehydrogenase from Geobacter metallireducens (strain ATCC 53774 / DSM 7210 / GS-15).